Here is a 420-residue protein sequence, read N- to C-terminus: Gamma-glutamyl phosphate reductase (420 aa).

This sequence belongs to the gamma-glutamyl phosphate reductase family.

It localises to the cytoplasm. It carries out the reaction L-glutamate 5-semialdehyde + phosphate + NADP(+) = L-glutamyl 5-phosphate + NADPH + H(+). It functions in the pathway amino-acid biosynthesis; L-proline biosynthesis; L-glutamate 5-semialdehyde from L-glutamate: step 2/2. Functionally, catalyzes the NADPH-dependent reduction of L-glutamate 5-phosphate into L-glutamate 5-semialdehyde and phosphate. The product spontaneously undergoes cyclization to form 1-pyrroline-5-carboxylate. The chain is Gamma-glutamyl phosphate reductase from Streptococcus gordonii (strain Challis / ATCC 35105 / BCRC 15272 / CH1 / DL1 / V288).